A 217-amino-acid chain; its full sequence is tRNA (guanine-N(7)-)-methyltransferase (217 aa).

S-adenosyl-L-methionine contacts are provided by Glu44, Glu69, Asn96, and Asp118. The active site involves Asp118. Substrate is bound at residue Lys122. Residues 124–129 (RHEKRR) are interaction with RNA. Substrate-binding positions include Asp154 and 191–194 (TEYE).

The protein belongs to the class I-like SAM-binding methyltransferase superfamily. TrmB family.

The catalysed reaction is guanosine(46) in tRNA + S-adenosyl-L-methionine = N(7)-methylguanosine(46) in tRNA + S-adenosyl-L-homocysteine. It functions in the pathway tRNA modification; N(7)-methylguanine-tRNA biosynthesis. In terms of biological role, catalyzes the formation of N(7)-methylguanine at position 46 (m7G46) in tRNA. This is tRNA (guanine-N(7)-)-methyltransferase from Geobacillus kaustophilus (strain HTA426).